We begin with the raw amino-acid sequence, 470 residues long: Cysteine--tRNA ligase (470 aa).

Cysteine 28 is a Zn(2+) binding site. The 'HIGH' region signature appears at 30-40 (PTVYNYIHIGN). Zn(2+) contacts are provided by cysteine 212, histidine 237, and glutamate 241. Positions 271–275 (KMSKS) match the 'KMSKS' region motif. Lysine 274 contributes to the ATP binding site.

It belongs to the class-I aminoacyl-tRNA synthetase family. Monomer. The cofactor is Zn(2+).

It is found in the cytoplasm. The enzyme catalyses tRNA(Cys) + L-cysteine + ATP = L-cysteinyl-tRNA(Cys) + AMP + diphosphate. In Pediococcus pentosaceus (strain ATCC 25745 / CCUG 21536 / LMG 10740 / 183-1w), this protein is Cysteine--tRNA ligase.